A 368-amino-acid polypeptide reads, in one-letter code: Ubiquitin domain-containing protein UBFD1 (368 aa).

The interval 106–139 is disordered; the sequence is SCDARGNLQPAPAQPPGDPAAQASVSNGEDAGGG. The Ubiquitin-like domain maps to 143 to 218; the sequence is ELVDLKIIWN…IMVVGSTIND (76 aa). The interval 231–263 is disordered; sequence QDAKAEENKKEPLCRQKQHRKVLDKGKPEDVMP. 2 stretches are compositionally biased toward basic and acidic residues: residues 233–244 and 251–260; these read AKAEENKKEPLC and KVLDKGKPED.

The polypeptide is Ubiquitin domain-containing protein UBFD1 (Ubfd1) (Mus musculus (Mouse)).